The primary structure comprises 789 residues: Zinc finger protein GLIS1 (789 aa).

Basic and acidic residues-rich tracts occupy residues 1–16 and 63–74; these read MHCEVAEALSDKRPKE and RAHDLLRPRSPR. 3 disordered regions span residues 1–29, 53–93, and 278–304; these read MHCEVAEALSDKRPKEAPGAPGQGRGPVS, LLPR…YGHS, and PPLPGDLGGPPKRSRPGPASSDGQEGS. A compositionally biased stretch (polar residues) spans 80–92; it reads KTGSGKVNGSYGH. A C2H2-type 1 zinc finger spans residues 366–391; the sequence is QACRWVDCCAAYEQQEELVRHIEKSH. The C2H2-type 2; atypical zinc finger occupies 400–427; it reads FTCFWAGCVRRYKPFNARYKLLIHMRVH. C2H2-type zinc fingers lie at residues 433–457, 463–487, and 493–517; these read NKCMFEGCSKAFSRLENLKIHLRSH, YLCQHPGCQKAFSNSSDRAKHQRTH, and YACQIPGCSKRYTDPSSLRKHVKAH. Disordered stretches follow at residues 506–529 and 573–684; these read DPSSLRKHVKAHSAKEQQVRKKLH and VYPG…QGYQ. The short motif at 511–527 is the Bipartite nuclear localization signal element; the sequence is RKHVKAHSAKEQQVRKK. The segment covering 648 to 658 has biased composition (low complexity); the sequence is ASQSQSPGGQS.

Belongs to the GLI C2H2-type zinc-finger protein family. Interacts with KLF4. Interacts with POU5F1 and/or POU5F1B. Interacts with SOX2. As to expression, in the adult, expressed highly in placenta and kidney and at lower levels in the testis, brain, colon, brown fat tissue and thymus. During embryo development, expressed in the frontal nasal region, branchial arches, somites, vibrissal and hair follicles, limb buds, craniofacial regions, ventral part of the tail, intervertebral disks, teeth, eyes and kidney.

It localises to the nucleus. In terms of biological role, acts both as a repressor and an ctivator of transcription. Binds to the consensus sequence 5'-GACCACCCAC-3'. By controlling the expression of genes involved in cell differentiation inhibits the lineage commitment of multipotent cells. Prevents, for instance, the differentiation of multipotent mesenchymal cells into adipocyte and osteoblast. The polypeptide is Zinc finger protein GLIS1 (Mus musculus (Mouse)).